The primary structure comprises 176 residues: NAD(P)H-quinone oxidoreductase subunit 6, chloroplastic (176 aa).

Helical transmembrane passes span 10 to 30 (FLLV…VLLP), 33 to 53 (IFSA…YILA), 61 to 81 (AQLL…VMFM), 92 to 112 (LWTV…FSLI), and 152 to 172 (FFLP…GAIS).

The protein belongs to the complex I subunit 6 family. NDH is composed of at least 16 different subunits, 5 of which are encoded in the nucleus.

Its subcellular location is the plastid. It localises to the chloroplast thylakoid membrane. The enzyme catalyses a plastoquinone + NADH + (n+1) H(+)(in) = a plastoquinol + NAD(+) + n H(+)(out). It catalyses the reaction a plastoquinone + NADPH + (n+1) H(+)(in) = a plastoquinol + NADP(+) + n H(+)(out). NDH shuttles electrons from NAD(P)H:plastoquinone, via FMN and iron-sulfur (Fe-S) centers, to quinones in the photosynthetic chain and possibly in a chloroplast respiratory chain. The immediate electron acceptor for the enzyme in this species is believed to be plastoquinone. Couples the redox reaction to proton translocation, and thus conserves the redox energy in a proton gradient. The chain is NAD(P)H-quinone oxidoreductase subunit 6, chloroplastic (ndhG) from Arabis hirsuta (Hairy rock-cress).